An 82-amino-acid chain; its full sequence is Small ribosomal subunit protein eS27A (82 aa).

A C4-type zinc finger spans residues 37–59; that stretch reads CPGCLNITTVFSHAQTAVTCESC. Cys-40 bears the S-methylcysteine mark.

This sequence belongs to the eukaryotic ribosomal protein eS27 family. In terms of assembly, component of the small ribosomal subunit (SSU). Mature yeast ribosomes consist of a small (40S) and a large (60S) subunit. The 40S small subunit contains 1 molecule of ribosomal RNA (18S rRNA) and 33 different proteins (encoded by 57 genes). The large 60S subunit contains 3 rRNA molecules (25S, 5.8S and 5S rRNA) and 46 different proteins (encoded by 81 genes). Zn(2+) is required as a cofactor. In terms of processing, the N-terminus is not modified.

It is found in the cytoplasm. Its function is as follows. Component of the ribosome, a large ribonucleoprotein complex responsible for the synthesis of proteins in the cell. The small ribosomal subunit (SSU) binds messenger RNAs (mRNAs) and translates the encoded message by selecting cognate aminoacyl-transfer RNA (tRNA) molecules. The large subunit (LSU) contains the ribosomal catalytic site termed the peptidyl transferase center (PTC), which catalyzes the formation of peptide bonds, thereby polymerizing the amino acids delivered by tRNAs into a polypeptide chain. The nascent polypeptides leave the ribosome through a tunnel in the LSU and interact with protein factors that function in enzymatic processing, targeting, and the membrane insertion of nascent chains at the exit of the ribosomal tunnel. This Saccharomyces cerevisiae (strain ATCC 204508 / S288c) (Baker's yeast) protein is Small ribosomal subunit protein eS27A.